Reading from the N-terminus, the 205-residue chain is Small ribosomal subunit protein uS7 (205 aa).

The protein belongs to the universal ribosomal protein uS7 family. Part of the 30S ribosomal subunit.

Functionally, one of the primary rRNA binding proteins, it binds directly to 16S rRNA where it nucleates assembly of the head domain of the 30S subunit. Is located at the subunit interface close to the decoding center. This Aeropyrum pernix (strain ATCC 700893 / DSM 11879 / JCM 9820 / NBRC 100138 / K1) protein is Small ribosomal subunit protein uS7.